The chain runs to 478 residues: Glycogen synthase (478 aa).

Position 15 (Lys15) interacts with ADP-alpha-D-glucose.

It belongs to the glycosyltransferase 1 family. Bacterial/plant glycogen synthase subfamily.

The enzyme catalyses [(1-&gt;4)-alpha-D-glucosyl](n) + ADP-alpha-D-glucose = [(1-&gt;4)-alpha-D-glucosyl](n+1) + ADP + H(+). It functions in the pathway glycan biosynthesis; glycogen biosynthesis. In terms of biological role, synthesizes alpha-1,4-glucan chains using ADP-glucose. This is Glycogen synthase from Clostridium botulinum (strain Eklund 17B / Type B).